Reading from the N-terminus, the 508-residue chain is Aromatase (508 aa).

Cys-437 contacts heme.

The protein belongs to the cytochrome P450 family. It depends on heme as a cofactor.

The protein resides in the membrane. The enzyme catalyses testosterone + 3 reduced [NADPH--hemoprotein reductase] + 3 O2 = 17beta-estradiol + formate + 3 oxidized [NADPH--hemoprotein reductase] + 4 H2O + 4 H(+). The catalysed reaction is androst-4-ene-3,17-dione + 3 reduced [NADPH--hemoprotein reductase] + 3 O2 = estrone + formate + 3 oxidized [NADPH--hemoprotein reductase] + 4 H2O + 4 H(+). Catalyzes the formation of aromatic C18 estrogens from C19 androgens. The chain is Aromatase (Cyp19a1) from Rattus norvegicus (Rat).